The following is a 698-amino-acid chain: Polyribonucleotide nucleotidyltransferase (698 aa).

Mg(2+) is bound by residues Asp-485 and Asp-491. In terms of domain architecture, KH spans 552-611 (PRIHTIKINTDKIRDVIGKGGAVIRSLCEETGTTIEIEDDGTVKIAATSGEQADDAINRI). The S1 motif domain maps to 621–689 (GTIYTGKVVR…RQGRVRLSIK (69 aa)).

It belongs to the polyribonucleotide nucleotidyltransferase family. In terms of assembly, component of the RNA degradosome, which is a multiprotein complex involved in RNA processing and mRNA degradation. It depends on Mg(2+) as a cofactor.

It is found in the cytoplasm. The catalysed reaction is RNA(n+1) + phosphate = RNA(n) + a ribonucleoside 5'-diphosphate. In terms of biological role, involved in mRNA degradation. Catalyzes the phosphorolysis of single-stranded polyribonucleotides processively in the 3'- to 5'-direction. The protein is Polyribonucleotide nucleotidyltransferase of Psychromonas ingrahamii (strain DSM 17664 / CCUG 51855 / 37).